The following is a 254-amino-acid chain: Low affinity immunoglobulin gamma Fc region receptor III-A (254 aa).

An N-terminal signal peptide occupies residues 1–20 (MWHLLPPSALLLLISSVTKA). At 21-209 (ADPSKAVVLL…IAPLFPLWQQ (189 aa)) the chain is on the extracellular side. Ig-like C2-type domains follow at residues 23–104 (PSKA…VQLQ) and 121–174 (KGES…YYCR). N-linked (GlcNAc...) asparagine glycosylation is found at N42, N63, N166, and N181. Disulfide bonds link C47/C90 and C129/C173. The chain crosses the membrane as a helical span at residues 210 to 230 (IAFCLMMGLLFAVDTGLYFFV). The Cytoplasmic portion of the chain corresponds to 231 to 254 (RRDLRRSMVHKEEYNFKWSQAQDK).

Forms a heterooligomeric complex with ITAM-containing signaling subunits FCER1G. Interacts (via transmembrane domain) with signaling subunits; this interaction is a prerequisite for receptor complex expression on the cell surface and intracellular signal transduction. Binds the Fc region of antigen-complexed IgG. N-glycosylated. In terms of processing, phosphorylated following receptor ligation.

Its subcellular location is the cell membrane. Receptor for the invariable Fc fragment of immunoglobulin gamma (IgG). Binds with intermediate affinity to both IgG2a and IgG2b. Can bind to IgG2a and IgG2b monomers. Does not display binding to IgG1 or IgG3. Recognizes neutralizing virus-specific IgGs displayed on the cell surface of infected cells and triggers antibody-dependent cellular cytotoxicity (ADCC). Confers protection to lethal influenza virus infection. On splenic dendritic cells, uptakes antigen immune complexes and efficiently divert them into MHC class I and II antigen presentation pathways to provide for superior priming of CD4-positive and CD8-positive T cell immune responses. Mediates neutrophil activation by IgG complexes redundantly with FCGR2A. Plays a role in promoting bone resorption by enhancing osteoclast differentiation following binding to IgG2a. Also acts as a receptor for the Fc region of immunoglobulin epsilon (IgE). Binds with low affinity to both the a and b allotypes of IgE. Has also been shown to bind to IgE allotype a only but not to allotype b. Binds aggregated IgE but not the monomeric form and bound monomeric IgG is readily displaced by IgE complexes. Binding to IgE promotes macrophage-mediated phagocytosis, antigen presentation to T cells, production of pro-inflammatory cytokines and the late phase of cutaneous allergic reactions. Mediates enhanced ADCC in response to afucosylated IgGs. The sequence is that of Low affinity immunoglobulin gamma Fc region receptor III-A from Cavia porcellus (Guinea pig).